The chain runs to 402 residues: N-acetyltransferase Eis (402 aa).

The 152-residue stretch at 3 to 154 folds into the N-acetyltransferase domain; sequence VTLCSPTEDD…RFARFHADAP (152 aa). Acetyl-CoA-binding positions include 85 to 87, 93 to 98, and 121 to 122; these read VAV, RRGLLR, and SE. Catalysis depends on Tyr-126, which acts as the Proton donor. The Proton acceptor; via carboxylate role is filled by Phe-402.

The protein belongs to the acetyltransferase Eis family. Homohexamer; trimer of dimers.

It localises to the secreted. Its subcellular location is the host cytoplasmic vesicle. The protein resides in the host phagosome. The protein localises to the extracellular vesicle. It is found in the bacterial extracellular vesicle. It localises to the host extracellular space. It catalyses the reaction L-lysyl-[protein] + acetyl-CoA = N(6)-acetyl-L-lysyl-[protein] + CoA + H(+). In terms of biological role, effector that is released into the host cell and affects host immune responses. Acts as an acetyltransferase that acetylates lysine residues of host proteins. This is N-acetyltransferase Eis from Mycobacterium bovis (strain BCG / Pasteur 1173P2).